The primary structure comprises 556 residues: TNF receptor-associated factor 6-A (556 aa).

Residues 72–111 form an RING-type; degenerate zinc finger; sequence CPICLMALREAVQTPCGHRFCKACILKSLRNAGHKCPVDN. 2 consecutive TRAF-type zinc fingers follow at residues 148-204 and 205-261; these read RHLE…EDKS and GHEL…HNLA. In terms of domain architecture, MATH spans 384–533; the sequence is NGVFIWRIKG…NDTLLVRCSV (150 aa).

Belongs to the TNF receptor-associated factor family. A subfamily. In terms of assembly, homotrimer. Homooligomer. Interacts with tifa. In terms of tissue distribution, highly expressed in ovary and moderately expressed in kidney, spleen, stomach, colon and testis.

The protein resides in the cytoplasm. It is found in the cell cortex. The protein localises to the nucleus. Its subcellular location is the lipid droplet. The enzyme catalyses S-ubiquitinyl-[E2 ubiquitin-conjugating enzyme]-L-cysteine + [acceptor protein]-L-lysine = [E2 ubiquitin-conjugating enzyme]-L-cysteine + N(6)-ubiquitinyl-[acceptor protein]-L-lysine.. The protein operates within protein modification; protein ubiquitination. E3 ubiquitin ligase that, together with UBE2N and UBE2V1, mediates the synthesis of 'Lys-63'-linked-polyubiquitin chains conjugated to proteins, such as IKBKG, IRAK1, AKT1 and AKT2. Also mediates ubiquitination of free/unanchored polyubiquitin chain that leads to MAP3K7 activation. This chain is TNF receptor-associated factor 6-A (traf6-a), found in Xenopus laevis (African clawed frog).